Here is a 248-residue protein sequence, read N- to C-terminus: Large ribosomal subunit protein uL30 (248 aa).

Methionine 1 carries the N-acetylmethionine modification. 4 consecutive repeat copies span residues 7-18, 19-30, 31-42, and 43-54. The tract at residues 7–54 is 4 X 12 AA tandem repeats; the sequence is KKKEVPAVPETLKKKRRNFAELKIKRLRKKFAQKMLRKARRKLIYEKA. At threonine 17 the chain carries Phosphothreonine. Residue lysine 124 is modified to N6-acetyllysine. The residue at position 127 (lysine 127) is an N6-succinyllysine. Tyrosine 139 is modified (phosphotyrosine).

This sequence belongs to the universal ribosomal protein uL30 family. As to quaternary structure, component of the large ribosomal subunit. Homodimer. Interacts with DHX33.

The protein localises to the cytoplasm. Functionally, component of the large ribosomal subunit. The ribosome is a large ribonucleoprotein complex responsible for the synthesis of proteins in the cell. Binds to G-rich structures in 28S rRNA and in mRNAs. Plays a regulatory role in the translation apparatus; inhibits cell-free translation of mRNAs. This chain is Large ribosomal subunit protein uL30 (RPL7), found in Homo sapiens (Human).